A 155-amino-acid chain; its full sequence is MVRAISDGIVISPIKNGTVIDHITPGEGLTVLRILGIRDGTNVTVIVASNVPSSRGGRKDMVKIENRELLKDEVDKIALVAPDATISIIRNFKVSVKKPVEVPKQIIGVIKCPNPNCITNTKEPVQSRFVVHPRGFRCQYCDSLISCEMDIGDYI.

Zn(2+) is bound by residues C112, C117, C138, and C141.

The protein belongs to the PyrI family. As to quaternary structure, contains catalytic and regulatory chains. It depends on Zn(2+) as a cofactor.

Functionally, involved in allosteric regulation of aspartate carbamoyltransferase. The sequence is that of Aspartate carbamoyltransferase regulatory chain from Methanocorpusculum labreanum (strain ATCC 43576 / DSM 4855 / Z).